The chain runs to 256 residues: Triosephosphate isomerase (256 aa).

10 to 12 contributes to the substrate binding site; sequence NWK. The active-site Electrophile is the His99. Residue Glu171 is the Proton acceptor of the active site. Substrate-binding positions include Gly177, Ser216, and 237–238; that span reads GG.

It belongs to the triosephosphate isomerase family. In terms of assembly, homodimer.

The protein resides in the cytoplasm. It carries out the reaction D-glyceraldehyde 3-phosphate = dihydroxyacetone phosphate. The protein operates within carbohydrate biosynthesis; gluconeogenesis. Its pathway is carbohydrate degradation; glycolysis; D-glyceraldehyde 3-phosphate from glycerone phosphate: step 1/1. Involved in the gluconeogenesis. Catalyzes stereospecifically the conversion of dihydroxyacetone phosphate (DHAP) to D-glyceraldehyde-3-phosphate (G3P). In Colwellia psychrerythraea (strain 34H / ATCC BAA-681) (Vibrio psychroerythus), this protein is Triosephosphate isomerase.